The chain runs to 164 residues: Transcriptional repressor NrdR (164 aa).

The segment at 3-34 is a zinc-finger region; it reads CPFCSAQDTKVIDSRLVADGVQIRRRRECLSC. The region spanning 49–139 is the ATP-cone domain; it reads PRLVKTDGTR…VYRSFQDISE (91 aa).

This sequence belongs to the NrdR family. Requires Zn(2+) as cofactor.

In terms of biological role, negatively regulates transcription of bacterial ribonucleotide reductase nrd genes and operons by binding to NrdR-boxes. This is Transcriptional repressor NrdR from Alcanivorax borkumensis (strain ATCC 700651 / DSM 11573 / NCIMB 13689 / SK2).